The sequence spans 516 residues: Probable cyclic di-GMP phosphodiesterase PdeB (516 aa).

2 helical membrane-spanning segments follow: residues 6–26 (LVGL…GLSI) and 242–262 (QVFI…MFVL). Positions 268-516 (IQSPHHRLQD…DFLRWAEQHL (249 aa)) constitute an EAL domain.

The protein localises to the cell inner membrane. It catalyses the reaction 3',3'-c-di-GMP + H2O = 5'-phosphoguanylyl(3'-&gt;5')guanosine + H(+). Functionally, phosphodiesterase (PDE) that catalyzes the hydrolysis of cyclic-di-GMP (c-di-GMP) to 5'-pGpG. The protein is Probable cyclic di-GMP phosphodiesterase PdeB of Escherichia coli (strain K12).